A 329-amino-acid polypeptide reads, in one-letter code: NAC domain-containing protein 71 (329 aa).

Residues 9-166 (LPPGFRFHPT…DWVLCRIYNK (158 aa)) enclose the NAC domain. Residues 228–281 (RSGSADRDSMPRLHTDSSGSEHVLSPSPSPDDFPGGGDHDYAESQPSGGCGGWP) form a disordered region. The segment covering 230 to 242 (GSADRDSMPRLHT) has biased composition (basic and acidic residues).

In terms of assembly, interacts with NAC048 and NAC002. In terms of tissue distribution, expressed in roots and embryo. Weakly expressed in callus.

It localises to the nucleus. Functionally, transcription activator that binds to the promoter of the stress response gene LEA19. Involved in tolerance to abiotic stresses. The chain is NAC domain-containing protein 71 from Oryza sativa subsp. japonica (Rice).